Consider the following 912-residue polypeptide: Lateral signaling target protein 2 homolog (912 aa).

Residues 323 to 332 show a composition bias toward low complexity; sequence NVNTSNNSDN. 4 disordered regions span residues 323-360, 455-610, 664-745, and 769-846; these read NVNTSNNSDNSDSRVDDSPNDELRHESETRDNRNSSFY, ADSG…ESSQ, NSSP…ASSA, and GGGS…APPR. Residues 333 to 355 are compositionally biased toward basic and acidic residues; the sequence is SDSRVDDSPNDELRHESETRDNR. The span at 455–468 shows a compositional bias: polar residues; the sequence is ADSGLGTANPSVDN. A compositionally biased stretch (acidic residues) spans 486-505; sequence SSEEGEIDEYDNEEDDEDSD. Basic residues predominate over residues 530 to 544; that stretch reads YRTHKQQHHHRHRRS. 2 stretches are compositionally biased toward polar residues: residues 545–556 and 572–590; these read SGSIMSATSSRK and VPSNQGTSSKTYSNCDTSP. A compositionally biased stretch (low complexity) spans 591-610; it reads SSGNQSECSSTSSTTGESSQ. Over residues 682–699 the composition is skewed to basic and acidic residues; it reads DKPKEPDPTDLFEFRASE. Composition is skewed to polar residues over residues 705 to 717, 735 to 745, 780 to 801, and 822 to 834; these read PGQNSGGSSQSIY, PGTSPIRASSA, ERSVSLSETSIVVENNGGATDS, and SRSSPNSPVNGTS. The segment at 850–910 adopts an FYVE-type zinc-finger fold; that stretch reads DGDAPRCMAC…VCRDCYVREV (61 aa). Cys-856, Cys-859, Cys-872, Cys-875, Cys-880, Cys-883, Cys-902, and Cys-905 together coordinate Zn(2+).

It belongs to the lst-2 family.

Functionally, negative regulator of epidermal growth factor receptor (EGFR) signaling. In Aedes aegypti (Yellowfever mosquito), this protein is Lateral signaling target protein 2 homolog.